The primary structure comprises 105 residues: Flagellar transcriptional regulator FlhD (105 aa).

The protein belongs to the FlhD family. Homodimer; disulfide-linked. Forms a heterohexamer composed of two FlhC and four FlhD subunits. Each FlhC binds a FlhD dimer, forming a heterotrimer, and a hexamer assembles by dimerization of two heterotrimers.

The protein localises to the cytoplasm. Its function is as follows. Functions in complex with FlhC as a master transcriptional regulator that regulates transcription of several flagellar and non-flagellar operons by binding to their promoter region. Activates expression of class 2 flagellar genes, including fliA, which is a flagellum-specific sigma factor that turns on the class 3 genes. Also regulates genes whose products function in a variety of physiological pathways. The protein is Flagellar transcriptional regulator FlhD of Nitrosomonas eutropha (strain DSM 101675 / C91 / Nm57).